A 339-amino-acid chain; its full sequence is Glyceraldehyde-3-phosphate dehydrogenase (339 aa).

Residues 12 to 13 (RI), Asp35, and Lys84 contribute to the NAD(+) site. D-glyceraldehyde 3-phosphate is bound by residues 155 to 157 (SCT), Thr186, 215 to 216 (TG), and Arg238. The Nucleophile role is filled by Cys156. Asn320 serves as a coordination point for NAD(+).

Belongs to the glyceraldehyde-3-phosphate dehydrogenase family. As to quaternary structure, homotetramer.

Its subcellular location is the cytoplasm. It carries out the reaction D-glyceraldehyde 3-phosphate + phosphate + NAD(+) = (2R)-3-phospho-glyceroyl phosphate + NADH + H(+). It functions in the pathway carbohydrate degradation; glycolysis; pyruvate from D-glyceraldehyde 3-phosphate: step 1/5. The chain is Glyceraldehyde-3-phosphate dehydrogenase (GAPD) from Mastigamoeba balamuthi (Phreatamoeba balamuthi).